Reading from the N-terminus, the 214-residue chain is Anti-sigma-F factor NrsF (214 aa).

Topologically, residues Met1–Arg25 are cytoplasmic. A helical transmembrane segment spans residues Leu26 to Gln46. Residues Ala47 to Gln53 are Periplasmic-facing. A helical transmembrane segment spans residues Ala54–Gly74. At Tyr75–Arg90 the chain is on the cytoplasmic side. A helical transmembrane segment spans residues Gly91–Ile111. At Thr112 to Arg134 the chain is on the periplasmic side. A helical transmembrane segment spans residues Ile135–Pro155. At Thr156–Pro158 the chain is on the cytoplasmic side. A helical membrane pass occupies residues Gly159–Leu179. The Periplasmic segment spans residues His180–Thr185. The chain crosses the membrane as a helical span at residues Phe186–Trp206. Over Ala207–Trp214 the chain is Cytoplasmic.

It belongs to the NrsF anti-sigma-F factor family.

Its subcellular location is the cell inner membrane. An anti-sigma factor for extracytoplasmic function (ECF) sigma factor sigma-F (SigF), which responds to chromate and cadmium. Overexpression leads to loss of response to dichromate. ECF sigma factors are held in an inactive form by a cognate anti-sigma factor. This chain is Anti-sigma-F factor NrsF, found in Caulobacter vibrioides (strain NA1000 / CB15N) (Caulobacter crescentus).